Here is a 465-residue protein sequence, read N- to C-terminus: MMKSRFCPSPTGLMHLGNARTALFNYLFAKSKDGIFLLRIEDTDVERSKETFDLGLQEDLRWLNLEWQEGPGADEGNGPYHQSKRQAIYDDYYQRLEEADQAYPCFCSEEQLRLSRKIQRSAGKPPRYAGTCRSLSAAEIEKKKAEGLQPALRFRVPDDEVVVFADLVRGEQRFQTNDIGDFIIRRANGTSPFMFCNAIDDALMGVSHVLRGEDHLTNTPRQLLILQALELPVPTYAHIALIVGPDGSPLSKRHGSRGIKELRDNGYLPLALTNYLARLGHYYASDELLSLAELAKGFNVESLSKSPAKFNAQQLDYWQKQTVNQLPNDDFWEWAGSELQSQIPTDKDDLFLTTVKPNVSFPRDVAYWVNVCFGKTLNLETAQSELLRATGNRYFEEAFEAFKKFGKDLNSVVSHLKEKLNLKGKPLYQPLRIALTGAEHGPELAKLILIMDYETIQNRLQEACQ.

The 'HIGH' region motif lies at 8 to 18; it reads PSPTGLMHLGN. A 'KMSKS' region motif is present at residues 249–253; that stretch reads PLSKR. Residue lysine 252 participates in ATP binding.

Belongs to the class-I aminoacyl-tRNA synthetase family. Glutamate--tRNA ligase type 1 subfamily. Monomer.

The protein resides in the cytoplasm. The catalysed reaction is tRNA(Glu) + L-glutamate + ATP = L-glutamyl-tRNA(Glu) + AMP + diphosphate. Catalyzes the attachment of glutamate to tRNA(Glu) in a two-step reaction: glutamate is first activated by ATP to form Glu-AMP and then transferred to the acceptor end of tRNA(Glu). In Coxiella burnetii (strain RSA 331 / Henzerling II), this protein is Glutamate--tRNA ligase 2.